Reading from the N-terminus, the 450-residue chain is Chromosomal replication initiator protein DnaA (450 aa).

The tract at residues 1 to 79 (MKDSYFDLNT…MEYAYDVAHD (79 aa)) is domain I, interacts with DnaA modulators. The domain II stretch occupies residues 79 to 112 (DFFKPELKVIKVVANPVNNQKSNQSNSDFVATDY). The domain III, AAA+ region stretch occupies residues 113-329 (QLNQNFTFDT…GAFNTLTLMA (217 aa)). ATP is bound by residues Gly-157, Gly-159, Lys-160, and Thr-161. The tract at residues 330–450 (RAGRPINVSN…NLSTKIKEKS (121 aa)) is domain IV, binds dsDNA.

Belongs to the DnaA family. Oligomerizes as a right-handed, spiral filament on DNA at oriC.

The protein resides in the cytoplasm. In terms of biological role, plays an essential role in the initiation and regulation of chromosomal replication. ATP-DnaA binds to the origin of replication (oriC) to initiate formation of the DNA replication initiation complex once per cell cycle. Binds the DnaA box (a 9 base pair repeat at the origin) and separates the double-stranded (ds)DNA. Forms a right-handed helical filament on oriC DNA; dsDNA binds to the exterior of the filament while single-stranded (ss)DNA is stabiized in the filament's interior. The ATP-DnaA-oriC complex binds and stabilizes one strand of the AT-rich DNA unwinding element (DUE), permitting loading of DNA polymerase. After initiation quickly degrades to an ADP-DnaA complex that is not apt for DNA replication. Binds acidic phospholipids. The chain is Chromosomal replication initiator protein DnaA from Oenococcus oeni (strain ATCC BAA-331 / PSU-1).